Consider the following 1065-residue polypeptide: NLR family CARD domain-containing protein 3 (1065 aa).

Residues 1–10 (MRKQEVRTGR) show a composition bias toward basic and acidic residues. The segment at 1-62 (MRKQEVRTGR…PLGPCSNDSR (62 aa)) is disordered. The 322-residue stretch at 139–460 (RVSITIGVAG…YCFTHLSLQE (322 aa)) folds into the NACHT domain. 145–152 (GVAGMGKT) is an ATP binding site. The short motif at 457–460 (SLQE) is the TRAF6-binding element. LRR repeat units follow at residues 617–639 (EANLSLSLSQGVLQSLLPQLLYC), 641–663 (KLRLDTNQFQDPVMELLGSVLSG), 665–688 (DCRIQKISLAENQISNKGAKALAR), 693–716 (NRSLTSLDLRGNSIGPQGAKALAD), 721–744 (NRTLTSLSLQGNTVRDDGARSMAE), 749–772 (NRTLSMLHLQKNSIGPMGAQRMAD), 777–800 (NRSLKELMFSSNSIGDGGAKALAE), 805–828 (NQGLESLDLQSNSISDAGVAALMG), 833–856 (NQTLLSLSLRENSISPEGAQAIAH), 861–884 (NSTLKNLDLTANLLHDQGARAIAV), 889–912 (NRTLTSLHLQWNFIQAGAAQALGQ), 917–940 (NRSLTSLDLQENAIGDDGACAVAR), 945–968 (NTALTALYLQVASIGASGAQVLGE), 973–996 (NRTLEILDLRGNAIGVAGAKALAN), 1001–1029 (NSSLRRLNLQENSLGMDGAICIATALSGN), and 1031–1052 (RLQHINLQGNHIGDSGARMISE).

The protein belongs to the NLRP family. In terms of assembly, directly interacts (via CARD) with TMEM173/STING; this interaction reduces TMEM173 trafficking to the perinuclear region in response to interferon stimulatory DNA. Also interacts, but to a lesser extent, with TBK1. Interacts with TRAF6; this interaction results in decreased TRAF6 'Lys-63'-linked polyubiquitination, but leaves 'Lys-48'-linked chains unchanged, promoting TRAF6 protein degradation. Interacts with PIK3R1/PIK3R2; this interaction disrupts the association between PIK3R1/PIK3R2 and the p110 catalytic subunit PIK3CA/PIK3CB/PIK3CD and reduces PIK3R1/PIK3R2 activation. Weakly interacts with PYCARD/ASC. Interacts with CASP1 and CASP5.

It is found in the cytoplasm. Negative regulator of the innate immune response. Attenuates signaling pathways activated by Toll-like receptors (TLRs) and the DNA sensor STING/TMEM173 in response to pathogen-associated molecular patterns, such as intracellular poly(dA:dT), but not poly(I:C), or in response to DNA virus infection, including that of Herpes simplex virus 1 (HSV1). May affect TLR4 signaling by acting at the level of TRAF6 ubiquitination, decreasing the activating 'Lys-63'-linked ubiquitination and leaving unchanged the degradative 'Lys-48'-linked ubiquitination. Inhibits the PI3K-AKT-mTOR pathway possibly by directly interacting with the posphatidylinositol 3-kinase regulatory subunit p85 (PIK3R1/PIK3R2) and disrupting the association between PIK3R1/PIK3R2 and the catalytic subunit p110 (PIK3CA/PIK3CB/PIK3CD) and reducing PIK3R1/PIK3R2 activation. Via its regulation of the PI3K-AKT-mTOR pathway, controls cell proliferation, predominantly in intestinal epithelial cells. May also affect NOD1- or NOD2-mediated NF-kappa-B activation. Might also affect the inflammatory response by preventing NLRP3 inflammasome formation, CASP1 cleavage and IL1B maturation. The chain is NLR family CARD domain-containing protein 3 (NLRC3) from Homo sapiens (Human).